Here is a 153-residue protein sequence, read N- to C-terminus: Large ribosomal subunit protein uL22 (153 aa).

The protein belongs to the universal ribosomal protein uL22 family. In terms of assembly, part of the 50S ribosomal subunit.

Its function is as follows. This protein binds specifically to 23S rRNA. It makes multiple contacts with different domains of the 23S rRNA in the assembled 50S subunit and ribosome. Functionally, the globular domain of the protein is located near the polypeptide exit tunnel on the outside of the subunit, while an extended beta-hairpin is found that lines the wall of the exit tunnel in the center of the 70S ribosome. The polypeptide is Large ribosomal subunit protein uL22 (Methanococcus maripaludis (strain DSM 14266 / JCM 13030 / NBRC 101832 / S2 / LL)).